A 446-amino-acid polypeptide reads, in one-letter code: Pre-rRNA-processing protein crb3/ipi3 (446 aa).

5 WD repeats span residues 74 to 113, 116 to 155, 172 to 214, 216 to 257, and 294 to 333; these read ILPE…LIYF, AHYQ…DQNS, GHKR…LLTT, ALPS…SNNV, and SCQS…VLRR.

It belongs to the WD repeat IPI3/WDR18 family. As to quaternary structure, component of the RIX1 complex, composed of ipi1, rix1/ipi2 and crb3/ipi3 in a 1:2:2 stoichiometry. The complex interacts (via rix1) with mdn1 (via its hexameric AAA ATPase ring) and the pre-60S ribosome particles. Interacts with rix1, gcr3 and Las1.

It localises to the nucleus. It is found in the chromosome. Required for both pre-rRNA processing and heterochromatic gene silencing. In terms of biological role, component of the RIX1 complex required for processing of ITS2 sequences from 35S pre-rRNA. The sequence is that of Pre-rRNA-processing protein crb3/ipi3 (crb3) from Schizosaccharomyces pombe (strain 972 / ATCC 24843) (Fission yeast).